The chain runs to 104 residues: V-type ATP synthase subunit F (104 aa).

It belongs to the V-ATPase F subunit family.

Functionally, produces ATP from ADP in the presence of a proton gradient across the membrane. The polypeptide is V-type ATP synthase subunit F (Thermus thermophilus (strain ATCC BAA-163 / DSM 7039 / HB27)).